The primary structure comprises 272 residues: Short-chain dehydrogenase srdC (272 aa).

7 residues coordinate NADP(+): isoleucine 15, aspartate 65, arginine 127, tyrosine 173, lysine 177, valine 206, and threonine 208. Tyrosine 173 serves as the catalytic Proton donor. Residue lysine 177 is the Lowers pKa of active site Tyr of the active site.

Belongs to the short-chain dehydrogenases/reductases (SDR) family.

Its function is as follows. Short-chain dehydrogenase; part of the gene cluster that mediates the biosynthesis of sordarial, a salicylic aldehyde structurally related to the phytotoxin pyriculol. The most interesting aspect of this pathway is formation of an aromatic product from the highly reducing polyketide synthase srdA. SrdA synthesizes a reduced polyketide chain from one molecule of acetyl-CoA and five molecules of malonyl-CoA. The polyketide chain is then reductively released as an aldehyde. The oxidoreductases srdC, srdD and srdE then oxidize one of the hydroxy groups to facilitate the intramolecular aldol condensation, followed by dehydration to yield a salicylic aldehyde. This aldehyde can undergo facile reduction by endogenous reductases to yield the alcohol 1-hydroxy-2-hydroxymethyl-3-pent-1,3-dienylbenzene. The flavin-dependent srdI counteract against the propensity of the aldehydes to be reduced under physiological conditions and is responsible for reoxidizing 1-hydroxy-2-hydroxymethyl-3-pent-1,3-dienylbenzene back to the salicylic aldehyde. This salicylic aldehyde is then selectively epoxidized by the cupin-domain-containing oxidoreductase srdB to yield the epoxide, which can be hydrolyzed stereoselectively by the hydrolase srdG to give the final product sordarial. In Neurospora crassa (strain ATCC 24698 / 74-OR23-1A / CBS 708.71 / DSM 1257 / FGSC 987), this protein is Short-chain dehydrogenase srdC.